Here is a 582-residue protein sequence, read N- to C-terminus: mRNA-decapping enzyme 1A (582 aa).

Serine 62 is subject to Phosphoserine. Basic and acidic residues predominate over residues 132–141; that stretch reads RSQQAARDKQ. 2 disordered regions span residues 132 to 154 and 172 to 214; these read RSQQ…DHRP and QMGD…PSGH. Serine 142, serine 179, serine 180, serine 315, serine 319, and serine 334 each carry phosphoserine. Residues 173 to 196 show a composition bias toward polar residues; sequence MGDSNISSPGLQPSTQLSNLGSTE. Residue threonine 348 is modified to Phosphothreonine. The residue at position 353 (serine 353) is a Phosphoserine. Arginine 376 is modified (asymmetric dimethylarginine). Phosphothreonine is present on threonine 401. Phosphoserine is present on residues serine 422, serine 522, serine 523, and serine 525. Residues 513–536 form a disordered region; the sequence is RSSDLERKASSPSPLTIGTPESQR. A compositionally biased stretch (polar residues) spans 522 to 533; the sequence is SSPSPLTIGTPE. Residues threonine 528 and threonine 531 each carry the phosphothreonine modification.

It belongs to the DCP1 family. As to quaternary structure, (Microbial infection) Interacts with rotavirus A non-structural protein 2; this interaction probably plays a role in the sequestration of DCP1A in viral factories. Interacts with rotavirus A non-structural protein 5; this interaction probably plays a role in its sequestration in viral factories. In terms of assembly, forms a complex with EDC3, DCP2, DDX6 and EDC4/HEDLS, within this complex directly interacts with EDC3. Part of a cytoplasmic complex containing proteins involved in mRNA decay, including XRN1 and LSM1. Interacts with DCP1B. Interacts with DCP2. Interacts with DDX17 in an RNA-independent manner. Interacts with PNRC2. Interacts with SMAD4. Interacts with UPF1. Interacts with ZC3HAV1. Interacts with ZFP36L1. Interacts with NBDY. Interacts with DHX34; the interaction is RNA-independent. As to expression, detected in heart, brain, placenta, lung, skeletal muscle, liver, kidney and pancreas.

It localises to the cytoplasm. It is found in the P-body. Its subcellular location is the nucleus. It catalyses the reaction a 5'-end (N(7)-methyl 5'-triphosphoguanosine)-ribonucleoside in mRNA + H2O = N(7)-methyl-GDP + a 5'-end phospho-ribonucleoside in mRNA + 2 H(+). Necessary for the degradation of mRNAs, both in normal mRNA turnover and in nonsense-mediated mRNA decay. Removes the 7-methyl guanine cap structure from mRNA molecules, yielding a 5'-phosphorylated mRNA fragment and 7m-GDP. Contributes to the transactivation of target genes after stimulation by TGFB1. Essential for embryonic development. This is mRNA-decapping enzyme 1A (DCP1A) from Homo sapiens (Human).